Here is a 381-residue protein sequence, read N- to C-terminus: Alkanesulfonate monooxygenase (381 aa).

The protein belongs to the SsuD family. Homotetramer.

It carries out the reaction an alkanesulfonate + FMNH2 + O2 = an aldehyde + FMN + sulfite + H2O + 2 H(+). Functionally, catalyzes the desulfonation of aliphatic sulfonates. In Escherichia coli O127:H6 (strain E2348/69 / EPEC), this protein is Alkanesulfonate monooxygenase.